Consider the following 485-residue polypeptide: Adenosylhomocysteinase (485 aa).

Substrate-binding residues include Thr64, Asp139, and Glu205. 206 to 208 (TTT) serves as a coordination point for NAD(+). Substrate-binding residues include Lys235 and Asp239. NAD(+) contacts are provided by residues Asn240, 269–274 (GYGDVG), Glu292, Asn327, 348–350 (IGH), and Asn397.

The protein belongs to the adenosylhomocysteinase family. It depends on NAD(+) as a cofactor.

It catalyses the reaction S-adenosyl-L-homocysteine + H2O = L-homocysteine + adenosine. The protein operates within amino-acid biosynthesis; L-homocysteine biosynthesis; L-homocysteine from S-adenosyl-L-homocysteine: step 1/1. In terms of biological role, adenosylhomocysteine is a competitive inhibitor of S-adenosyl-L-methionine-dependent methyl transferase reactions; therefore adenosylhomocysteinase may play a key role in the control of methylations via regulation of the intracellular concentration of adenosylhomocysteine. This chain is Adenosylhomocysteinase (SAHH), found in Solanum lycopersicum (Tomato).